Reading from the N-terminus, the 201-residue chain is NADH-quinone oxidoreductase subunit I (201 aa).

4Fe-4S ferredoxin-type domains lie at 78 to 107 and 116 to 147; these read MSYEKAKSRCVACYMCQTACPMPTLFRIEA and KVVRFDMNLLNCLFCGLCVDACPVGCLTMTDI. Cys-87, Cys-90, Cys-93, Cys-97, Cys-127, Cys-130, Cys-133, and Cys-137 together coordinate [4Fe-4S] cluster.

It belongs to the complex I 23 kDa subunit family. NDH-1 is composed of 14 different subunits. Subunits NuoA, H, J, K, L, M, N constitute the membrane sector of the complex. Requires [4Fe-4S] cluster as cofactor.

It is found in the cell inner membrane. It carries out the reaction a quinone + NADH + 5 H(+)(in) = a quinol + NAD(+) + 4 H(+)(out). In terms of biological role, NDH-1 shuttles electrons from NADH, via FMN and iron-sulfur (Fe-S) centers, to quinones in the respiratory chain. The immediate electron acceptor for the enzyme in this species is believed to be ubiquinone. Couples the redox reaction to proton translocation (for every two electrons transferred, four hydrogen ions are translocated across the cytoplasmic membrane), and thus conserves the redox energy in a proton gradient. The protein is NADH-quinone oxidoreductase subunit I of Aquifex aeolicus (strain VF5).